The chain runs to 287 residues: 4-hydroxybenzoate octaprenyltransferase (287 aa).

A run of 6 helical transmembrane segments spans residues 41–61 (VSLL…GCAI), 92–112 (VALA…LNAL), 133–153 (FFAI…PMAF), 160–180 (VPLL…AYDT), 197–217 (TSAL…YAVT), and 267–287 (NNWL…AQAF).

The protein belongs to the UbiA prenyltransferase family. Requires Mg(2+) as cofactor.

The protein localises to the cell inner membrane. The enzyme catalyses all-trans-octaprenyl diphosphate + 4-hydroxybenzoate = 4-hydroxy-3-(all-trans-octaprenyl)benzoate + diphosphate. The protein operates within cofactor biosynthesis; ubiquinone biosynthesis. Functionally, catalyzes the prenylation of para-hydroxybenzoate (PHB) with an all-trans polyprenyl group. Mediates the second step in the final reaction sequence of ubiquinone-8 (UQ-8) biosynthesis, which is the condensation of the polyisoprenoid side chain with PHB, generating the first membrane-bound Q intermediate 3-octaprenyl-4-hydroxybenzoate. This Paraburkholderia phymatum (strain DSM 17167 / CIP 108236 / LMG 21445 / STM815) (Burkholderia phymatum) protein is 4-hydroxybenzoate octaprenyltransferase.